Reading from the N-terminus, the 102-residue chain is MSVLVAFSVTPLGVGEGVGEIVTEAIRVVRDSGLPNQTDAMFTVIEGDTWAEVMAVVQRAVEAVAARAPRVSAVIKVDWRPGVTDAMTQKVATVERYLLRPE.

The protein belongs to the UPF0045 family.

The polypeptide is UPF0045 protein Mb1933 (Mycobacterium bovis (strain ATCC BAA-935 / AF2122/97)).